The following is a 192-amino-acid chain: uncharacterized protein (192 aa).

The protein to M.thermoautotrophicum MTH863.

This is an uncharacterized protein from Methanocaldococcus jannaschii (strain ATCC 43067 / DSM 2661 / JAL-1 / JCM 10045 / NBRC 100440) (Methanococcus jannaschii).